Reading from the N-terminus, the 465-residue chain is Cyclin-A1 (465 aa).

The protein belongs to the cyclin family. Cyclin AB subfamily. In terms of assembly, interacts with the CDK2 and the CDC2 protein kinases to form a serine/threonine kinase holoenzyme complex. The cyclin subunit imparts substrate specificity to the complex. Does not bind CDK4 and CDK5 (in vitro). The cyclin A1-CDK2 complex interacts with transcription factor E2F-1 and RB proteins. Found in a complex with CDK2, CABLES1 and CCNE1. Interacts with INCA1. Interacts with KLHDC9. In terms of processing, polyubiquitinated via 'Lys-11'-linked ubiquitin by the anaphase-promoting complex (APC/C), leading to its degradation by the proteasome. Deubiquitinated and stabilized by USP37 enables entry into S phase. Ubiquitinated during the G1 phase by the SCF(FBXO31) complex, leading to its proteasomal degradation. As to expression, very high levels in testis and very low levels in brain. Also found in myeloid leukemia cell lines.

It localises to the nucleus. Its function is as follows. May be involved in the control of the cell cycle at the G1/S (start) and G2/M (mitosis) transitions. May primarily function in the control of the germline meiotic cell cycle and additionally in the control of mitotic cell cycle in some somatic cells. In Homo sapiens (Human), this protein is Cyclin-A1 (CCNA1).